A 382-amino-acid chain; its full sequence is Anhydro-N-acetylmuramic acid kinase (382 aa).

An ATP-binding site is contributed by 9-16 (GTSLDGID).

The protein belongs to the anhydro-N-acetylmuramic acid kinase family.

It catalyses the reaction 1,6-anhydro-N-acetyl-beta-muramate + ATP + H2O = N-acetyl-D-muramate 6-phosphate + ADP + H(+). Its pathway is amino-sugar metabolism; 1,6-anhydro-N-acetylmuramate degradation. It participates in cell wall biogenesis; peptidoglycan recycling. Its function is as follows. Catalyzes the specific phosphorylation of 1,6-anhydro-N-acetylmuramic acid (anhMurNAc) with the simultaneous cleavage of the 1,6-anhydro ring, generating MurNAc-6-P. Is required for the utilization of anhMurNAc either imported from the medium or derived from its own cell wall murein, and thus plays a role in cell wall recycling. The chain is Anhydro-N-acetylmuramic acid kinase from Bacillus cereus (strain Q1).